We begin with the raw amino-acid sequence, 335 residues long: Glutamyl-tRNA reductase (335 aa).

Substrate is bound by residues 60–63 (TCHR), Ser110, 115–117 (ETE), and Gln121. Cys61 serves as the catalytic Nucleophile. 189-194 (GYSEIN) provides a ligand contact to NADP(+).

This sequence belongs to the glutamyl-tRNA reductase family. As to quaternary structure, homodimer.

It catalyses the reaction (S)-4-amino-5-oxopentanoate + tRNA(Glu) + NADP(+) = L-glutamyl-tRNA(Glu) + NADPH + H(+). Its pathway is porphyrin-containing compound metabolism; protoporphyrin-IX biosynthesis; 5-aminolevulinate from L-glutamyl-tRNA(Glu): step 1/2. In terms of biological role, catalyzes the NADPH-dependent reduction of glutamyl-tRNA(Glu) to glutamate 1-semialdehyde (GSA). The polypeptide is Glutamyl-tRNA reductase (Chlamydia trachomatis serovar A (strain ATCC VR-571B / DSM 19440 / HAR-13)).